The primary structure comprises 356 residues: Alpha-N-acetylneuraminide alpha-2,8-sialyltransferase (356 aa).

Residues Met1–Pro29 are Cytoplasmic-facing. Residues Val30 to Val48 form a helical; Signal-anchor for type II membrane protein membrane-spanning segment. At Tyr49–Ser356 the chain is on the lumenal side. 2 N-linked (GlcNAc...) asparagine glycosylation sites follow: Asn71 and Asn119. A disulfide bridge connects residues Cys138 and Cys287. CMP-N-acetyl-beta-neuraminate-binding residues include Asn143 and Asn166. N-linked (GlcNAc...) asparagine glycosylation is found at Asn214 and Asn245. CMP-N-acetyl-beta-neuraminate contacts are provided by Ser274, Thr275, Gly276, Trp296, and His310.

The protein belongs to the glycosyltransferase 29 family.

The protein localises to the golgi apparatus membrane. The enzyme catalyses an N-acetyl-alpha-neuraminyl-(2-&gt;3)-beta-D-galactosyl derivative + CMP-N-acetyl-beta-neuraminate = an N-acetyl-alpha-neuraminyl-(2-&gt;8)-N-acetyl-alpha-neuraminyl-(2-&gt;3)-beta-D-galactosyl derivative + CMP + H(+). It catalyses the reaction a ganglioside GM3 (d18:1(4E)) + CMP-N-acetyl-beta-neuraminate = a ganglioside GD3 (d18:1(4E)) + CMP + H(+). It carries out the reaction a ganglioside GD3 (d18:1(4E)) + CMP-N-acetyl-beta-neuraminate = a ganglioside GT3 (d18:1(4E)) + CMP + H(+). The catalysed reaction is a ganglioside GD1a (d18:1(4E)) + CMP-N-acetyl-beta-neuraminate = a ganglioside GT1a (d18:1(4E)) + CMP + H(+). The enzyme catalyses a ganglioside GT1b (d18:1(4E)) + CMP-N-acetyl-beta-neuraminate = a ganglioside GQ1b (d18:1(4E)) + CMP + H(+). It catalyses the reaction a ganglioside GM1b (d18:1(4E)) + CMP-N-acetyl-beta-neuraminate = a ganglioside GD1c (d18:1(4E)) + CMP + H(+). It carries out the reaction a ganglioside GD3 + CMP-N-acetyl-beta-neuraminate = a ganglioside GT3 + CMP + H(+). The catalysed reaction is [alpha-N-acetylneuraminyl-(2-&gt;8)](n)-alpha-N-acetylneuraminyl-(2-&gt;8)-alpha-N-acetylneuraminyl-(2-&gt;3)-beta-D-galactosyl-(1-&gt;4)-beta-D-glucosyl-(1&lt;-&gt;1)-ceramide + CMP-N-acetyl-beta-neuraminate = [alpha-N-acetylneuraminyl-(2-&gt;8)](n+1)-alpha-N-acetylneuraminyl-(2-&gt;8)-alpha-N-acetylneuraminyl-(2-&gt;3)-beta-D-galactosyl-(1-&gt;4)-beta-D-glucosyl-(1&lt;-&gt;1)-ceramide + CMP + H(+). Its pathway is protein modification; protein glycosylation. It participates in lipid metabolism; sphingolipid metabolism. Its function is as follows. Catalyzes the addition of sialic acid in alpha 2,8-linkage to the sialic acid moiety of the ganglioside GM3 to form ganglioside GD3; gangliosides are a subfamily of complex glycosphingolipds that contain one or more residues of sialic acid. Can catalyze the addition of a second alpha-2,8- sialic acid to GD3 to form GT3. Can use GM1b, GD1a and GT1b as acceptor substrates to synthesize GD1c, GT1a and GQ1b respectively. The sequence is that of Alpha-N-acetylneuraminide alpha-2,8-sialyltransferase from Bos taurus (Bovine).